A 468-amino-acid polypeptide reads, in one-letter code: 3-isopropylmalate dehydratase large subunit (468 aa).

Positions 347, 407, and 410 each coordinate [4Fe-4S] cluster.

Belongs to the aconitase/IPM isomerase family. LeuC type 1 subfamily. Heterodimer of LeuC and LeuD. Requires [4Fe-4S] cluster as cofactor.

It catalyses the reaction (2R,3S)-3-isopropylmalate = (2S)-2-isopropylmalate. The protein operates within amino-acid biosynthesis; L-leucine biosynthesis; L-leucine from 3-methyl-2-oxobutanoate: step 2/4. Its function is as follows. Catalyzes the isomerization between 2-isopropylmalate and 3-isopropylmalate, via the formation of 2-isopropylmaleate. This is 3-isopropylmalate dehydratase large subunit from Synechococcus elongatus (strain ATCC 33912 / PCC 7942 / FACHB-805) (Anacystis nidulans R2).